Here is a 175-residue protein sequence, read N- to C-terminus: Isopentenyl-diphosphate Delta-isomerase (175 aa).

Mn(2+) is bound by residues His-23 and His-30. Residues 28–162 (TLHLAFCVFV…PLRYTPWFRR (135 aa)) form the Nudix hydrolase domain. The active site involves Cys-65. Residue His-67 participates in Mn(2+) binding. Glu-85 contacts Mg(2+). Residues Glu-111 and Glu-113 each coordinate Mn(2+). Glu-113 is a catalytic residue.

This sequence belongs to the IPP isomerase type 1 family. Mg(2+) serves as cofactor. It depends on Mn(2+) as a cofactor.

The protein localises to the cytoplasm. It catalyses the reaction isopentenyl diphosphate = dimethylallyl diphosphate. Its pathway is isoprenoid biosynthesis; dimethylallyl diphosphate biosynthesis; dimethylallyl diphosphate from isopentenyl diphosphate: step 1/1. Functionally, catalyzes the 1,3-allylic rearrangement of the homoallylic substrate isopentenyl (IPP) to its highly electrophilic allylic isomer, dimethylallyl diphosphate (DMAPP). This Halorhodospira halophila (strain DSM 244 / SL1) (Ectothiorhodospira halophila (strain DSM 244 / SL1)) protein is Isopentenyl-diphosphate Delta-isomerase.